The chain runs to 505 residues: Betaine aldehyde dehydrogenase 1 (505 aa).

163–172 is a binding site for betaine aldehyde; that stretch reads WNYPLLMATW. 240-245 contributes to the NAD(+) binding site; sequence GSTETG. Betaine aldehyde contacts are provided by residues E262, 294-297, and C455; that span reads QVCS. Catalysis depends on residues E262 and C296. Residues 262 to 263 and C296 each bind 4-aminobutanal; that span reads EL. 4-aminobutanal is bound at residue W461. A Microbody targeting signal motif is present at residues 503-505; the sequence is SKL.

The protein belongs to the aldehyde dehydrogenase family. Homodimer.

Its subcellular location is the peroxisome. The catalysed reaction is betaine aldehyde + NAD(+) + H2O = glycine betaine + NADH + 2 H(+). Its pathway is amine and polyamine biosynthesis; betaine biosynthesis via choline pathway; betaine from betaine aldehyde: step 1/1. Dehydrogenase that can use N-acetyl-gamma-aminobutyraldehyde (NAGABald), gamma-guanidinobutyraldehyde (GGBald), betaine aldehyde (Bet-ald), gamma-aminobutyraldehyde (GAB-ald), acetaldehyde, 4-aminobutylaldehyde (AB-ald), 3-aminopropionaldehyde (AP-ald), 4-N-trimethylaminobutyraldehyde (TMAB-ald) and 3-N-trimethylaminopropionaldehyde (TMAP-ald) as substrates. Catalyzes the oxidation of GAB-ald more efficiently than Bet-ald. May convert acetaldehyde into acetate, thus facilitating the production of acetyl-CoA in peroxisomes under anaerobic conditions. This is Betaine aldehyde dehydrogenase 1 (BADH1) from Oryza sativa subsp. japonica (Rice).